Reading from the N-terminus, the 635-residue chain is MEPAMEPETLEARINRATNPLNKELNWASINSFCEQLNEDFEGPPLATRLLAHKIQSPQEWEAIQALTVLETCMKSCGKRFHDEVGKFRFLNELIKVVSPKYLGSRTSEKVKSKILELLYSWTVCLPEEVKIAEAYQMLKKQGIVKSDPKLPEDAIFPLPPPRPKNVIFEDEEKSKMLARLLKSSHPEDLRAANKLIKEMVQEDQKRMEKISKRVNAIEEVNNNVKLLTEMVMSHSQGAASSSSEDLMKELYQRCERMRPTLFRLASDTEDNDEALAEILQANDNLTQVINLYKQLVRGEEVNGDATASSIPGSTSALLDLSGLDLPPPGTTQPATPTRPGNQSSPEQLSASVSLLDDELMSLGLSDPTPPSGTSSDSVGWDNFQSSDGTESSVPPPAQAPSMDCRPPAQAPPPTSSGLDDLDLLGKTLMQQALPPEAQQVRWEKQQPAPRLTLRDLQSKSSSPSPGAASLLHTTSPEPPGPPPQATPTEFSLTSITVPLESIKPSSILPVTVYDQHGFRVLFHFARDPLPGRSDVLVVVVSMLSTAPQPIRNIVFQSAVPKVMKVRLQPPSGTELPAFNPIVHPSAITQVLLLANPQKEKVRLRYKLIFTMGDQTYNEMGDVDQFPPPETWGSL.

Position 1 is an N-acetylmethionine (Met1). One can recognise a VHS domain in the interval 17–147 (ATNPLNKELN…MLKKQGIVKS (131 aa)). The interaction with ARF3 stretch occupies residues 114-273 (KILELLYSWT…RLASDTEDND (160 aa)). The GAT domain maps to 171-298 (DEEKSKMLAR…VINLYKQLVR (128 aa)). A Phosphoserine modification is found at Ser185. Residues 299 to 505 (GEEVNGDATA…ITVPLESIKP (207 aa)) form a unstructured hinge region. The tract at residues 305–349 (DATASSIPGSTSALLDLSGLDLPPPGTTQPATPTRPGNQSSPEQL) is disordered. The span at 313–325 (GSTSALLDLSGLD) shows a compositional bias: low complexity. Ser354 bears the Phosphoserine mark. An Autoinhibitory motif is present at residues 357 to 361 (DDELM). Disordered regions lie at residues 362-422 (SLGL…LDDL) and 455-490 (RDLQSKSSSPSPGAASLLHTTSPEPPGPPPQATPTE). The span at 383-393 (NFQSSDGTESS) shows a compositional bias: polar residues. Position 417 is a phosphoserine (Ser417). Over residues 459–476 (SKSSSPSPGAASLLHTTS) the composition is skewed to low complexity. A compositionally biased stretch (pro residues) spans 477 to 486 (PEPPGPPPQA). The GAE domain occupies 506 to 627 (SSILPVTVYD…NEMGDVDQFP (122 aa)).

It belongs to the GGA protein family. In terms of assembly, monomer. Interacts with GGA2 and GGA3. Binds to clathrin and activated ARFs, including ARF1, ARF5 and ARF6. Interacts with RABEP1 and RABGEF1. Interacts with the type-I membrane proteins LRP3, M6PR/CD-MPR and IGF2R/CI-MPR. Interacts (via N-terminal VHS domain) with SORL1/sorLA and SORT1 (via C-terminal cytosolic domain). Interacts with EPN4. Interacts with CCDC91. Interacts with HEATR5B/p200a. Interacts with SYNRG/gamma-synergin. Interacts (via GAE doamin) with NECAP1 and NECAP2. Interacts (via GAE domain) with AFTPH/aftiphilin. Interacts with TSG101 and UBC. Interacts with RNF11. Interacts (via VHS domain) with BACE1 (via DXXLL motif); the interaction highly increases when BACE1 is phosphorylated at 'Ser-498'. Interacts with CNST. Interacts with ADRA2B. Interacts with ARL3; the interaction recruits, in collaboration with RABEP1, PKD1:PKD2 complex to trans-Golgi network and is required for ciliary targeting. In terms of processing, phosphorylated by CK2 and dephosphorylated by PP2A. Phosphorylation of GGA1 allows the internal DXXLL motif to bind the VHS domain and to inhibit the recognition of cargo signals. Ubiquitinated.

It is found in the golgi apparatus. It localises to the trans-Golgi network membrane. The protein localises to the endosome membrane. Its subcellular location is the early endosome membrane. Its function is as follows. Plays a role in protein sorting and trafficking between the trans-Golgi network (TGN) and endosomes. Mediates the ARF-dependent recruitment of clathrin to the TGN and binds ubiquitinated proteins and membrane cargo molecules with a cytosolic acidic cluster-dileucine (DXXLL) motif. Mediates export of the GPCR receptor ADRA2B to the cell surface. Required for targeting PKD1:PKD2 complex from the trans-Golgi network to the cilium membrane. Regulates retrograde transport of proteins such as phosphorylated form of BACE1 from endosomes to the trans-Golgi network. The polypeptide is ADP-ribosylation factor-binding protein GGA1 (Gga1) (Mus musculus (Mouse)).